The chain runs to 718 residues: Exostosin-2 (718 aa).

At 1–25 (MCASVKYNIRGPALIPRMKTKHRIY) the chain is on the cytoplasmic side. A helical; Signal-anchor for type II membrane protein transmembrane segment spans residues 26 to 46 (YITLFSIVLLGLIATGMFQFW). Topologically, residues 47–718 (PHSIESSGDW…LKSFPNIGSL (672 aa)) are lumenal. Disulfide bonds link cysteine 85–cysteine 90, cysteine 96–cysteine 151, cysteine 286–cysteine 300, and cysteine 318–cysteine 339. Asparagine 288 carries an N-linked (GlcNAc...) asparagine glycan. UDP-binding residues include leucine 461, arginine 465, asparagine 490, and asparagine 517. Residues arginine 465, asparagine 490, asparagine 517, arginine 522, aspartate 538, aspartate 539, and aspartate 540 each contribute to the UDP-N-acetyl-alpha-D-glucosamine site. Positions 538 and 539 each coordinate UDP. Aspartate 540 is a binding site for Mn(2+). A protein contacts are provided by tyrosine 582 and serine 584. A disulfide bridge links cysteine 626 with cysteine 676. 2 residues coordinate UDP-N-acetyl-alpha-D-glucosamine: glutamate 627 and aspartate 628. The N-linked (GlcNAc...) asparagine glycan is linked to asparagine 637. Positions 651 and 653 each coordinate a protein. Position 673 (arginine 673) interacts with UDP-N-acetyl-alpha-D-glucosamine.

Belongs to the glycosyltransferase 47 family. Part of the heparan sulfate polymerase, a dimeric complex composed of EXT1 and EXT2. Could also form homooligomeric complexes. Interacts with NDST1. Interacts with GALNT5. Mn(2+) is required as a cofactor. In terms of processing, a soluble form is generated by proteolytic processing. Post-translationally, N-glycosylated at Asn-637.

It localises to the golgi apparatus membrane. The protein resides in the golgi apparatus. The protein localises to the cis-Golgi network membrane. It is found in the endoplasmic reticulum membrane. Its subcellular location is the secreted. The enzyme catalyses 3-O-{[(1-&gt;4)-beta-D-GlcA-(1-&gt;4)-alpha-D-GlcNAc](n)-(1-&gt;4)-beta-D-GlcA-(1-&gt;3)-beta-D-Gal-(1-&gt;3)-beta-D-Gal-(1-&gt;4)-beta-D-Xyl}-L-seryl-[protein] + UDP-N-acetyl-alpha-D-glucosamine = 3-O-{alpha-D-GlcNAc-[(1-&gt;4)-beta-D-GlcA-(1-&gt;4)-alpha-D-GlcNAc](n)-(1-&gt;4)-beta-D-GlcA-(1-&gt;3)-beta-D-Gal-(1-&gt;3)-beta-D-Gal-(1-&gt;4)-beta-D-Xyl}-L-seryl-[protein] + UDP + H(+). It participates in protein modification; protein glycosylation. Functionally, glycosyltransferase forming with EXT1 the heterodimeric heparan sulfate polymerase which catalyzes the elongation of the heparan sulfate glycan backbone. Glycan backbone extension consists in the alternating transfer of (1-&gt;4)-beta-D-GlcA and (1-&gt;4)-alpha-D-GlcNAc residues from their respective UDP-sugar donors. Both EXT1 and EXT2 are required for the full activity of the polymerase since EXT1 bears the N-acetylglucosaminyl-proteoglycan 4-beta-glucuronosyltransferase activity within the complex while EXT2 carries the glucuronosyl-N-acetylglucosaminyl-proteoglycan 4-alpha-N-acetylglucosaminyltransferase activity. Heparan sulfate proteoglycans are ubiquitous components of the extracellular matrix and play an important role in tissue homeostasis and signaling. The chain is Exostosin-2 from Bos taurus (Bovine).